A 132-amino-acid polypeptide reads, in one-letter code: Fluoride-specific ion channel FluC 2 (132 aa).

Helical transmembrane passes span 8–28 (LQLE…GALL), 41–61 (LLVN…PAAP), 66–86 (LLGI…LAAV), and 96–116 (AALG…ALGF). 2 residues coordinate Na(+): glycine 73 and threonine 76.

This sequence belongs to the fluoride channel Fluc/FEX (TC 1.A.43) family.

The protein resides in the cell inner membrane. The catalysed reaction is fluoride(in) = fluoride(out). With respect to regulation, na(+) is not transported, but it plays an essential structural role and its presence is essential for fluoride channel function. Its function is as follows. Fluoride-specific ion channel. Important for reducing fluoride concentration in the cell, thus reducing its toxicity. This Synechococcus sp. (strain CC9605) protein is Fluoride-specific ion channel FluC 2.